Here is a 312-residue protein sequence, read N- to C-terminus: Bifunctional pinoresinol-lariciresinol reductase 1 (312 aa).

NADP(+) is bound by residues 10–16, Arg-35, and Lys-44; that span reads GGTGYIG. The Proton acceptor role is filled by Lys-136. Arg-140 serves as a coordination point for NADP(+). Residue His-268 coordinates substrate.

This sequence belongs to the NmrA-type oxidoreductase family. Isoflavone reductase subfamily. In terms of assembly, dimer. Expressed in seeds and roots, but not in stems. Detected in leaves.

The enzyme catalyses (-)-lariciresinol + NADP(+) = (-)-pinoresinol + NADPH + H(+). It carries out the reaction (+)-secoisolariciresinol + NADP(+) = (-)-lariciresinol + NADPH + H(+). Functionally, reductase involved in lignan biosynthesis. Catalyzes the enantioselective conversion of (-)-pinoresinol into (-)-lariciresinol and of (-)-lariciresinol into (+)-secoisolariciresinol. Abstracts the 4R-hydride from the NADPH cofactor during catalysis. The protein is Bifunctional pinoresinol-lariciresinol reductase 1 (PLR_Lu1) of Linum usitatissimum (Flax).